Here is an 896-residue protein sequence, read N- to C-terminus: Protein translocase subunit SecA (896 aa).

ATP is bound by residues glutamine 87, 105–109 (GEGKT), and aspartate 512. The disordered stretch occupies residues 867 to 889 (QEPARSNRVAGRNDPCPCGSGKK). Residues cysteine 882, cysteine 884, cysteine 893, and cysteine 894 each contribute to the Zn(2+) site.

It belongs to the SecA family. Monomer and homodimer. Part of the essential Sec protein translocation apparatus which comprises SecA, SecYEG and auxiliary proteins SecDF-YajC and YidC. It depends on Zn(2+) as a cofactor.

The protein resides in the cell inner membrane. Its subcellular location is the cytoplasm. The catalysed reaction is ATP + H2O + cellular proteinSide 1 = ADP + phosphate + cellular proteinSide 2.. In terms of biological role, part of the Sec protein translocase complex. Interacts with the SecYEG preprotein conducting channel. Has a central role in coupling the hydrolysis of ATP to the transfer of proteins into and across the cell membrane, serving as an ATP-driven molecular motor driving the stepwise translocation of polypeptide chains across the membrane. The sequence is that of Protein translocase subunit SecA from Pelobacter propionicus (strain DSM 2379 / NBRC 103807 / OttBd1).